The sequence spans 283 residues: Thymidylate synthase (283 aa).

R22 lines the dUMP pocket. The active-site Nucleophile is the C160. Residues 180–183, N191, and 221–223 each bind dUMP; these read RSCD and HIY. D183 contributes to the (6R)-5,10-methylene-5,6,7,8-tetrahydrofolate binding site. A (6R)-5,10-methylene-5,6,7,8-tetrahydrofolate-binding site is contributed by S282.

Belongs to the thymidylate synthase family. Bacterial-type ThyA subfamily. In terms of assembly, homodimer.

It localises to the cytoplasm. It carries out the reaction dUMP + (6R)-5,10-methylene-5,6,7,8-tetrahydrofolate = 7,8-dihydrofolate + dTMP. The protein operates within pyrimidine metabolism; dTTP biosynthesis. In terms of biological role, catalyzes the reductive methylation of 2'-deoxyuridine-5'-monophosphate (dUMP) to 2'-deoxythymidine-5'-monophosphate (dTMP) while utilizing 5,10-methylenetetrahydrofolate (mTHF) as the methyl donor and reductant in the reaction, yielding dihydrofolate (DHF) as a by-product. This enzymatic reaction provides an intracellular de novo source of dTMP, an essential precursor for DNA biosynthesis. This chain is Thymidylate synthase, found in Haemophilus influenzae (strain ATCC 51907 / DSM 11121 / KW20 / Rd).